The sequence spans 437 residues: RNA-binding motif, single-stranded-interacting protein 3 (437 aa).

The tract at residues 28 to 57 (YAPAPHPMAPPSPSTNSSSNNSSNNSSGEQ) is disordered. Over residues 31 to 40 (APHPMAPPSP) the composition is skewed to pro residues. The span at 41–54 (STNSSSNNSSNNSS) shows a compositional bias: low complexity. 2 consecutive RRM domains span residues 61 to 134 (TNLY…MAKQ) and 140 to 225 (TNLY…FADG). Positions 399-422 (TSPQTVAPSSQDTSGQQQQIAVDT) are enriched in polar residues. The disordered stretch occupies residues 399–437 (TSPQTVAPSSQDTSGQQQQIAVDTSNEHAPAYSYQQSKP).

As to expression, expressed in fetal brain, fetal lung, fetal liver, heart, brain, placenta, lung, liver, muscle, kidney and pancreas.

Its subcellular location is the cytoplasm. In terms of biological role, binds poly(A) and poly(U) oligoribonucleotides. This is RNA-binding motif, single-stranded-interacting protein 3 (RBMS3) from Homo sapiens (Human).